Consider the following 1020-residue polypeptide: Fanconi-associated nuclease 1 (1020 aa).

The segment covering Met1–Lys11 has biased composition (basic and acidic residues). The interval Met1–Lys24 is disordered. Positions Arg14 to Thr22 match the D-box motif. A UBZ4-type zinc finger spans residues Lys41 to Val69. Zn(2+) is bound by residues Cys44, Cys47, His59, and Cys64. Residues Lys173–Asn208 are disordered. A compositionally biased stretch (polar residues) spans Gln180–Asp195. The short motif at Lys212–Asn214 is the KEN box element. The span at Glu224–Gln242 shows a compositional bias: basic and acidic residues. 2 disordered regions span residues Glu224–Thr252 and Leu269–Arg288. Over residues Leu269–Gly278 the composition is skewed to polar residues. Residues Ser673–Ala737 adopt a coiled-coil conformation. 4 residues coordinate Mn(2+): Glu837, Asp963, Glu978, and Val979. The VRR-NUC domain occupies Ala898–Val1010.

Belongs to the FAN1 family. In terms of assembly, interacts with FANCD2 (when monoubiquitinated). Interacts with FANCI, MLH1, MLH3 and PMS2. Mn(2+) serves as cofactor. It depends on Mg(2+) as a cofactor. Post-translationally, ubiquitinated and degraded during mitotic exit by the APC/C-Cdh1 complex.

The protein resides in the nucleus. The enzyme catalyses Hydrolytically removes 5'-nucleotides successively from the 3'-hydroxy termini of 3'-hydroxy-terminated oligonucleotides.. In terms of biological role, nuclease required for the repair of DNA interstrand cross-links (ICL) recruited at sites of DNA damage by monoubiquitinated FANCD2. Specifically involved in repair of ICL-induced DNA breaks by being required for efficient homologous recombination, probably in the resolution of homologous recombination intermediates. Not involved in DNA double-strand breaks resection. Acts as a 5'-3' exonuclease that anchors at a cut end of DNA and cleaves DNA successively at every third nucleotide, allowing to excise an ICL from one strand through flanking incisions. Probably keeps excising with 3'-flap annealing until it reaches and unhooks the ICL. Acts at sites that have a 5'-terminal phosphate anchor at a nick or a 1- or 2-nucleotide flap and is augmented by a 3' flap. Also has endonuclease activity toward 5'-flaps. This is Fanconi-associated nuclease 1 from Mus musculus (Mouse).